We begin with the raw amino-acid sequence, 179 residues long: Transthyretin-like protein 46 (179 aa).

The first 17 residues, 1-17 (MNKLFVLLIALLGLTAA), serve as a signal peptide directing secretion. A disordered region spans residues 144-179 (RRGGFNADYMDPDNSEKDQSKSSEESEDKEKTVETF). The span at 157-179 (NSEKDQSKSSEESEDKEKTVETF) shows a compositional bias: basic and acidic residues.

It belongs to the nematode transthyretin-like family.

It is found in the secreted. The protein is Transthyretin-like protein 46 (ttr-46) of Caenorhabditis elegans.